A 428-amino-acid polypeptide reads, in one-letter code: 47 kDa outer membrane protein (428 aa).

The N-terminal stretch at 1–25 (MAKTSKFTQTLLASALAVVAGSASA) is a signal peptide.

It belongs to the OmpP1/FadL family.

It is found in the cell outer membrane. The chain is 47 kDa outer membrane protein from Pasteurella multocida (strain Pm70).